We begin with the raw amino-acid sequence, 460 residues long: Cysteine--tRNA ligase (460 aa).

Residue Cys-28 coordinates Zn(2+). Residues Met-30–His-40 carry the 'HIGH' region motif. Residues Cys-209, His-234, and Glu-238 each coordinate Zn(2+). A 'KMSKS' region motif is present at residues Lys-266–Ser-270. ATP is bound at residue Lys-269.

It belongs to the class-I aminoacyl-tRNA synthetase family. In terms of assembly, monomer. Requires Zn(2+) as cofactor.

The protein resides in the cytoplasm. The enzyme catalyses tRNA(Cys) + L-cysteine + ATP = L-cysteinyl-tRNA(Cys) + AMP + diphosphate. This chain is Cysteine--tRNA ligase, found in Pseudomonas aeruginosa (strain UCBPP-PA14).